The primary structure comprises 103 residues: Putative sulfurtransferase YtwF (103 aa).

The 84-residue stretch at 17 to 100 folds into the Rhodanese domain; it reads ADEELYLIDV…GMMAWEGETK (84 aa). Cysteine 65 serves as the catalytic Cysteine persulfide intermediate.

This is Putative sulfurtransferase YtwF (ytwF) from Bacillus subtilis (strain 168).